An 804-amino-acid polypeptide reads, in one-letter code: Endoplasmin (804 aa).

The N-terminal stretch at 1-21 (MRALWVLGLCCVLLTFGSVRA) is a signal peptide. The short motif at 42–44 (SRT) is the SRT pseudosubstrate motif element. N-linked (GlcNAc...) asparagine glycosylation is present at N62. A Phosphoserine modification is found at S64. A glycan (N-linked (GlcNAc...) asparagine) is linked at N107. ATP is bound by residues N107, D149, and N162. Position 168 is an N6-(2-hydroxyisobutyryl)lysine (K168). At S172 the chain carries Phosphoserine. Residue F199 coordinates ATP. N217 carries N-linked (GlcNAc...) asparagine glycosylation. A disordered region spans residues 288-323 (TVEEPMEEEEAAKEEKEESDDEAAVEEEEEEKKPKT). Over residues 289 to 317 (VEEPMEEEEAAKEEKEESDDEAAVEEEEE) the composition is skewed to acidic residues. Phosphoserine occurs at positions 306 and 403. Position 404 is an N6-succinyllysine (K404). An N-linked (GlcNAc...) asparagine glycan is attached at N445. The residue at position 447 (S447) is a Phosphoserine. Residue K479 is modified to N6-acetyllysine. N-linked (GlcNAc...) asparagine glycosylation is found at N481 and N502. At K633 the chain carries N6-succinyllysine. The tract at residues 750-804 (DPDAKVEEEPEEEPEETTEDTTEDTEQDEDEEMDVGTDEEEQETAKESTAEKDEL) is disordered. Acidic residues predominate over residues 757–791 (EEPEEEPEETTEDTTEDTEQDEDEEMDVGTDEEEQ). T786 is modified (phosphothreonine). The segment covering 792–804 (ETAKESTAEKDEL) has biased composition (basic and acidic residues). The Prevents secretion from ER motif lies at 801 to 804 (KDEL).

The protein belongs to the heat shock protein 90 family. In terms of assembly, homodimer; disulfide-linked. Component of an EIF2 complex at least composed of CELF1/CUGBP1, CALR, CALR3, EIF2S1, EIF2S2, HSP90B1 and HSPA5. Part of a large chaperone multiprotein complex comprising DNAJB11, HSP90B1, HSPA5, HYOU, PDIA2, PDIA4, PDIA6, PPIB, SDF2L1, UGGT1 and very small amounts of ERP29, but not, or at very low levels, CALR nor CANX. Interacts with AIMP1; regulates its retention in the endoplasmic reticulum. Hyperglycosylated form interacts with OS9; promoting its degradation by the endoplasmic reticulum associated degradation (ERAD). Interacts with CNPY3. This interaction is disrupted in the presence of ATP. Interacts with TLR4 and TLR9, but not with TLR3. Interacts with MZB1 in a calcium-dependent manner. Interacts with METTL23. Interacts with IL1B; the interaction facilitates cargo translocation into the ERGIC. Interacts with EIF2AK3. Post-translationally, phosphorylated by CK2. N-glycosylated cotranslationally at Asn-217 by STT3A-containing OST-A complex: this glycosylation is constitutive. In response to various stress, 5 additional facultative sites (Asn-62, Asn-107, Asn-445, Asn-481 and Asn-502) can be glycosylated post-translationally by STT3B-containing OST-B complex, leading to a hyperglycosylated form that is degraded by the ER-associated degradation (ERAD) pathway. In normal conditions, the OST-A complex together with CCDC134 prevent glycosylation at facultative sites during protein folding, thereby preventing hyperglycosylation. Mechanistically, nascent HSP90B1 is tethered during translation to a specialized CCDC134-containing translocon that forms a microenvironment for its folding, in which STT3A associates with the SRT pseudosubstrate motif, and prevents access to facultative glycosylation sites until folding is completed, rendering its facultative sites inaccessible to the OST-B complex.

Its subcellular location is the endoplasmic reticulum lumen. The protein localises to the sarcoplasmic reticulum lumen. The protein resides in the melanosome. The catalysed reaction is ATP + H2O = ADP + phosphate + H(+). Its function is as follows. ATP-dependent chaperone involved in the processing of proteins in the endoplasmic reticulum, regulating their transport. Together with MESD, acts as a modulator of the Wnt pathway by promoting the folding of LRP6, a coreceptor of the canonical Wnt pathway. When associated with CNPY3, required for proper folding of Toll-like receptors. Promotes folding and trafficking of TLR4 to the cell surface. May participate in the unfolding of cytosolic leaderless cargos (lacking the secretion signal sequence) such as the interleukin 1/IL-1 to facilitate their translocation into the ERGIC (endoplasmic reticulum-Golgi intermediate compartment) and secretion; the translocation process is mediated by the cargo receptor TMED10. The sequence is that of Endoplasmin (HSP90B1) from Pongo abelii (Sumatran orangutan).